Reading from the N-terminus, the 269-residue chain is Ribonuclease HII (269 aa).

The region spanning 28–222 (RHVAGADEAG…VSGRRGAPPR (195 aa)) is the RNase H type-2 domain. The a divalent metal cation site is built by D34, E35, and D128.

This sequence belongs to the RNase HII family. Mn(2+) serves as cofactor. The cofactor is Mg(2+).

The protein localises to the cytoplasm. It carries out the reaction Endonucleolytic cleavage to 5'-phosphomonoester.. Its function is as follows. Endonuclease that specifically degrades the RNA of RNA-DNA hybrids. The sequence is that of Ribonuclease HII from Salinispora arenicola (strain CNS-205).